Reading from the N-terminus, the 457-residue chain is Multidrug resistance protein MdtK (457 aa).

12 consecutive transmembrane segments (helical) span residues 11–31 (LLALAIPVILAQVAQTAMGFV), 53–73 (IWLPAILFGHGLLLALTPVVA), 93–113 (WLAGFVSVLIMVVLWNAGYII), 127–147 (AVGYLRALLWGAPGYLFFQVA), 160–180 (GMVMGFIGLLVNIPVNYIFIY), 191–211 (VGCGVATASVYWVMFASMLWW), 243–263 (LPIALALFFEVTLFAVVALLV), 276–296 (IALNFSSLMFVLPLSLAAAVT), 316–336 (RTGVGVGVCLAVFTAIFTVLM), 357–377 (LMLLAAIYQISDSIQVIGSGI), 387–407 (IFFITFTAYWVLGLPSGYLLA), and 418–438 (PAGFWCGFIIGLTSAAIMMML).

This sequence belongs to the multi antimicrobial extrusion (MATE) (TC 2.A.66.1) family. MdtK subfamily.

It is found in the cell inner membrane. Its function is as follows. Multidrug efflux pump that functions probably as a Na(+)/drug antiporter. The sequence is that of Multidrug resistance protein MdtK from Klebsiella pneumoniae subsp. pneumoniae (strain ATCC 700721 / MGH 78578).